Consider the following 500-residue polypeptide: Lycopene beta cyclase, chloroplastic (500 aa).

The N-terminal 81 residues, 1 to 81 (MDTLLKTPNN…ELPMYDPSKG (81 aa)), are a transit peptide targeting the chloroplast. 86-114 (LAVVGGGPAGLAVAQQVSEAGLSVCSIDP) serves as a coordination point for NAD(+).

This sequence belongs to the lycopene cyclase family.

Its subcellular location is the plastid. It localises to the chloroplast. The catalysed reaction is a carotenoid psi-end group = a carotenoid beta-end derivative. The protein operates within carotenoid biosynthesis; beta-carotene biosynthesis. Its pathway is carotenoid biosynthesis; beta-zeacarotene biosynthesis. Catalyzes the double cyclization reaction which converts lycopene to beta-carotene and neurosporene to beta-zeacarotene. In Solanum lycopersicum (Tomato), this protein is Lycopene beta cyclase, chloroplastic (LCY1).